Consider the following 213-residue polypeptide: NDR1/HIN1-like protein 26 (213 aa).

The Cytoplasmic portion of the chain corresponds to 1–27; it reads MSQISITSPKHCAKKGGININNRHKKL. A helical membrane pass occupies residues 28–48; it reads FFTFSTFFSGLLLIIFLVWLI. Residues 49–213 are Lumenal-facing; it reads LHPERPEFSL…LQGTRCSTTI (165 aa). 3 N-linked (GlcNAc...) asparagine glycosylation sites follow: asparagine 67, asparagine 77, and asparagine 195.

Expressed in the vasculature of roots, rosette leaves, stems, cauline leaves and flowers. Specifically expressed in phloem.

It is found in the cell junction. The protein resides in the plasmodesma. The protein localises to the endoplasmic reticulum membrane. Functionally, involved in the regulation of sugar, amino acid and some primary metabolite export from companion cells (CCs) to sieve elements (SEs) in phloem. Required for apoplastic phloem sugar loading in source leaves in order to transport it to sink tissues. Required for correct sugar partitioning between source leaves and sink organs. The polypeptide is NDR1/HIN1-like protein 26 (Arabidopsis thaliana (Mouse-ear cress)).